A 306-amino-acid polypeptide reads, in one-letter code: Large ribosomal subunit protein mL45 (306 aa).

A disordered region spans residues 287–306 (LKPEEEYEEAQGEAQKPQLA).

Belongs to the mitochondrion-specific ribosomal protein mL45 family. Component of the mitochondrial large ribosomal subunit (mt-LSU). Mature mammalian 55S mitochondrial ribosomes consist of a small (28S) and a large (39S) subunit. The 28S small subunit contains a 12S ribosomal RNA (12S mt-rRNA) and 30 different proteins. The 39S large subunit contains a 16S rRNA (16S mt-rRNA), a copy of mitochondrial valine transfer RNA (mt-tRNA(Val)), which plays an integral structural role, and 52 different proteins.

It localises to the mitochondrion. In terms of biological role, component of the mitochondrial large ribosomal subunit (mt-LSU). Within the mitochondrial ribosomes, required to direct the nascent polypeptide toward the tunnel exit and position the exit at a distance from the membrane surface. The sequence is that of Large ribosomal subunit protein mL45 from Homo sapiens (Human).